Here is a 224-residue protein sequence, read N- to C-terminus: Fibrillarin-like rRNA/tRNA 2'-O-methyltransferase (224 aa).

S-adenosyl-L-methionine contacts are provided by residues 82–83, 100–101, 125–126, and 145–148; these read TT, EF, DA, and DVAQ.

The protein belongs to the methyltransferase superfamily. Fibrillarin family. As to quaternary structure, interacts with nop5. Component of box C/D small ribonucleoprotein (sRNP) particles that contain rpl7ae, FlpA and nop5, plus a guide RNA.

In terms of biological role, involved in pre-rRNA and tRNA processing. Utilizes the methyl donor S-adenosyl-L-methionine to catalyze the site-specific 2'-hydroxyl methylation of ribose moieties in rRNA and tRNA. Site specificity is provided by a guide RNA that base pairs with the substrate. Methylation occurs at a characteristic distance from the sequence involved in base pairing with the guide RNA. This is Fibrillarin-like rRNA/tRNA 2'-O-methyltransferase from Methanothermobacter thermautotrophicus (strain ATCC 29096 / DSM 1053 / JCM 10044 / NBRC 100330 / Delta H) (Methanobacterium thermoautotrophicum).